Here is a 571-residue protein sequence, read N- to C-terminus: Cytosolic Fe-S cluster assembly factor NAR1 (571 aa).

Cysteine 20, cysteine 62, cysteine 65, cysteine 68, cysteine 204, and cysteine 259 together coordinate [4Fe-4S] cluster. The disordered stretch occupies residues 415 to 437; that stretch reads AKPSRMPGGKPIGSARRPNGKAS. [4Fe-4S] cluster contacts are provided by cysteine 449 and cysteine 453.

The protein belongs to the NARF family.

Its function is as follows. Component of the cytosolic Fe/S protein assembly machinery. Required for maturation of extramitochondrial Fe/S proteins. May play a role in the transfer of pre-assembled Fe/S clusters to target apoproteins. The protein is Cytosolic Fe-S cluster assembly factor NAR1 (NAR1) of Sclerotinia sclerotiorum (strain ATCC 18683 / 1980 / Ss-1) (White mold).